The primary structure comprises 87 residues: Small cysteine-rich outer membrane protein omcA (87 aa).

The signal sequence occupies residues Met-1–Ser-19. Cys-20 is lipidated: N-palmitoyl cysteine. Residue Cys-20 is the site of S-diacylglycerol cysteine attachment.

Part of a disulfide cross-linked outer membrane complex (COMC) composed of the major outer membrane porin (MOMP), the small cysteine-rich protein (omcA) and the large cysteine-rich periplasmic protein (omcB). Post-translationally, N-terminal amide-linked and S-diacylglycerol cysteine-linked to 16:0, 18:0, 15:0 branched, and 17:0 branched fatty acids (ratio 6:5:3:4) in the EB stage. The exact distribution of fatty acids has not been determined. In terms of processing, the N-terminus is blocked.

The protein localises to the cell outer membrane. Functionally, in elementary bodies (EBs, the infectious stage, which is able to survive outside the host cell) provides the structural integrity of the outer envelope through disulfide cross-links with the large cysteine-rich periplasmic protein and the major outer membrane porin. It has been described in publications as the Sarkosyl-insoluble COMC (Chlamydia outer membrane complex), and serves as the functional equivalent of peptidoglycan. The polypeptide is Small cysteine-rich outer membrane protein omcA (omcA) (Chlamydia psittaci (Chlamydophila psittaci)).